The following is a 436-amino-acid chain: GTPase Der (436 aa).

2 consecutive EngA-type G domains span residues Pro-4–Glu-167 and Ile-175–Asn-351. GTP-binding positions include Gly-10–Ser-17, Asp-57–Ile-61, Asn-119–Asp-122, Gly-181–Ser-188, Asp-229–Met-233, and Asn-294–Asp-297. One can recognise a KH-like domain in the interval Thr-352–Lys-436.

Belongs to the TRAFAC class TrmE-Era-EngA-EngB-Septin-like GTPase superfamily. EngA (Der) GTPase family. As to quaternary structure, associates with the 50S ribosomal subunit.

Functionally, GTPase that plays an essential role in the late steps of ribosome biogenesis. The chain is GTPase Der from Streptococcus suis (strain 98HAH33).